A 90-amino-acid chain; its full sequence is Small ribosomal subunit protein uS15 (90 aa).

This sequence belongs to the universal ribosomal protein uS15 family. Part of the 30S ribosomal subunit. Forms a bridge to the 50S subunit in the 70S ribosome, contacting the 23S rRNA.

One of the primary rRNA binding proteins, it binds directly to 16S rRNA where it helps nucleate assembly of the platform of the 30S subunit by binding and bridging several RNA helices of the 16S rRNA. Its function is as follows. Forms an intersubunit bridge (bridge B4) with the 23S rRNA of the 50S subunit in the ribosome. This is Small ribosomal subunit protein uS15 from Wolbachia pipientis subsp. Culex pipiens (strain wPip).